A 459-amino-acid chain; its full sequence is FBD-associated F-box protein At4g13985 (459 aa).

The F-box domain occupies 18–64 (VDRLRNLPDCLLFKILLNLPTKDVVKLSVLSRRWRNVWRYVPGLDLE). The 55-residue stretch at 375–429 (KEGANILPGPRRFLTSLEYVKIAKPMAAEASEIKLKLVSYFLENSTILKKLTLCL) folds into the FBD domain.

This is FBD-associated F-box protein At4g13985 from Arabidopsis thaliana (Mouse-ear cress).